A 259-amino-acid chain; its full sequence is Polycomb group RING finger protein 1 (259 aa).

The RING-type zinc-finger motif lies at 45-84 (CYLCAGYFIDATTITECLHTFCKSCIVKYLQTSKYCPLCN).

Component of a PRC1-like complex.

It is found in the nucleus. In terms of biological role, component of a Polycomb group (PcG) multiprotein PRC1-like complex, a complex class required to maintain the transcriptionally repressive state of many genes, including Hox genes, throughout development. PcG PRC1 complex acts via chromatin remodeling and modification of histones; it mediates monoubiquitination of histone H2A 'Lys-119', rendering chromatin heritably changed in its expressibility. The sequence is that of Polycomb group RING finger protein 1 (pcgf1) from Xenopus laevis (African clawed frog).